The primary structure comprises 229 residues: NAD(P)H-quinone oxidoreductase subunit K, chloroplastic (229 aa).

Positions 43, 44, 108, and 139 each coordinate [4Fe-4S] cluster.

Belongs to the complex I 20 kDa subunit family. NDH is composed of at least 16 different subunits, 5 of which are encoded in the nucleus. [4Fe-4S] cluster is required as a cofactor.

The protein localises to the plastid. It localises to the chloroplast thylakoid membrane. The catalysed reaction is a plastoquinone + NADH + (n+1) H(+)(in) = a plastoquinol + NAD(+) + n H(+)(out). It catalyses the reaction a plastoquinone + NADPH + (n+1) H(+)(in) = a plastoquinol + NADP(+) + n H(+)(out). In terms of biological role, NDH shuttles electrons from NAD(P)H:plastoquinone, via FMN and iron-sulfur (Fe-S) centers, to quinones in the photosynthetic chain and possibly in a chloroplast respiratory chain. The immediate electron acceptor for the enzyme in this species is believed to be plastoquinone. Couples the redox reaction to proton translocation, and thus conserves the redox energy in a proton gradient. This is NAD(P)H-quinone oxidoreductase subunit K, chloroplastic from Aethionema grandiflorum (Persian stone-cress).